We begin with the raw amino-acid sequence, 271 residues long: Homeobox protein pal-1 (271 aa).

Disordered stretches follow at residues 1 to 25 (MSVDVKSEFSENDSSSSSSSPTNVN), 100 to 135 (PPLSNGSSSSDSGMYPSPNDLTPFPSTSSGIGASSS), and 178 to 202 (GSAGKERRASSDTKSLPTGPGTNNV). 2 stretches are compositionally biased toward low complexity: residues 100–117 (PPLSNGSSSSDSGMYPSP) and 125–135 (STSSGIGASSS). Residues 189–202 (DTKSLPTGPGTNNV) are compositionally biased toward polar residues. A DNA-binding region (homeobox) is located at residues 207–266 (ADKYRMVYSDYQRLELEKEFHTSAFITSDRKSQLSTMLSLTERQIKIWFQNRRAKDRRDK).

This sequence belongs to the Caudal homeobox family. In terms of assembly, interacts with tir-1 and let-756.

It is found in the nucleus. It localises to the chromosome. The protein localises to the centromere. Its subcellular location is the kinetochore. Transcriptional activator. Interacts with promoter regions for tbx-8.9, tbx-9, elt-1, hnd-1, scrt-1, and vab-7 genes. Binds the sequence ATTTATGAC. Binds to the enhancer region of the hlh-1 gene promoter during embryonic body wall muscle development. Activates the gene for mab-5 in embryo development. Necessary for vab-7 expression in C blastomeres in the posterior of embryos. Required for posterior V6 neuroectoblast cell fate specification during postembryonic neurogenesis (patterning) which generates the characteristic ray lineage during male tail development. Binds to ced-3 promoter and activated expression which is crucial for tail-spike cell death. Has a role in E cell specification in endoderm development and body wall muscle development. This is Homeobox protein pal-1 from Caenorhabditis briggsae.